A 209-amino-acid chain; its full sequence is MKAVVQRVTRASVTVGGEQISAIGRGICVLLGISLEDTQKELEHMVRKILNLRVFEDESGKHWSKSVMDKQYEVLCVSQFTLQCVLKGNKPDFHLAMPAEQAESFYKGFLEQLRKAYRPELVKDGKFGAYMQVHIQNDGPVTIELESPAPGAAASDPKQLSKLEKQQQRKEKTRAKGPSESSKERSAPRKEDRSASSGAEGDVSSEREP.

Residues Val4, Gln6, and Cys28 each contribute to the Mg(2+) site. Residues 139-140 carry the Gly-cisPro motif, important for rejection of L-amino acids motif; sequence GP. Residues 142-209 form a disordered region; that stretch reads TIELESPAPG…EGDVSSEREP (68 aa). 2 stretches are compositionally biased toward basic and acidic residues: residues 159–170 and 181–194; these read QLSKLEKQQQRK and SSKE…EDRS. Phosphoserine is present on residues Ser197, Ser204, and Ser205.

It belongs to the DTD family. In terms of assembly, homodimer. Interacts with CDC45 and TOPBP1. In terms of processing, preferentially phosphorylated in cells arrested early in S phase. Phosphorylation in the C-terminus weakens the interaction with CDC45.

The protein resides in the nucleus. The protein localises to the cytoplasm. It catalyses the reaction glycyl-tRNA(Ala) + H2O = tRNA(Ala) + glycine + H(+). The catalysed reaction is a D-aminoacyl-tRNA + H2O = a tRNA + a D-alpha-amino acid + H(+). Its function is as follows. An aminoacyl-tRNA editing enzyme that deacylates mischarged D-aminoacyl-tRNAs. Also deacylates mischarged glycyl-tRNA(Ala), protecting cells against glycine mischarging by AlaRS. Acts via tRNA-based rather than protein-based catalysis; rejects L-amino acids rather than detecting D-amino acids in the active site. By recycling D-aminoacyl-tRNA to D-amino acids and free tRNA molecules, this enzyme counteracts the toxicity associated with the formation of D-aminoacyl-tRNA entities in vivo and helps enforce protein L-homochirality. Functionally, ATPase involved in DNA replication, may facilitate loading of CDC45 onto pre-replication complexes. This chain is D-aminoacyl-tRNA deacylase 1 (DTD1), found in Bos taurus (Bovine).